A 162-amino-acid chain; its full sequence is D-aminoacyl-tRNA deacylase (162 aa).

A Gly-cisPro motif, important for rejection of L-amino acids motif is present at residues 145–146 (GP).

Belongs to the DTD family. As to quaternary structure, homodimer.

It localises to the cytoplasm. It carries out the reaction glycyl-tRNA(Ala) + H2O = tRNA(Ala) + glycine + H(+). The enzyme catalyses a D-aminoacyl-tRNA + H2O = a tRNA + a D-alpha-amino acid + H(+). Its function is as follows. An aminoacyl-tRNA editing enzyme that deacylates mischarged D-aminoacyl-tRNAs. Also deacylates mischarged glycyl-tRNA(Ala), protecting cells against glycine mischarging by AlaRS. Acts via tRNA-based rather than protein-based catalysis; rejects L-amino acids rather than detecting D-amino acids in the active site. By recycling D-aminoacyl-tRNA to D-amino acids and free tRNA molecules, this enzyme counteracts the toxicity associated with the formation of D-aminoacyl-tRNA entities in vivo and helps enforce protein L-homochirality. This Bifidobacterium longum (strain DJO10A) protein is D-aminoacyl-tRNA deacylase.